A 124-amino-acid chain; its full sequence is Small ribosomal subunit protein eS8 (124 aa).

The span at 1 to 22 shows a compositional bias: basic residues; that stretch reads MQYQGRSKRSKTGARLRPRSKK. 2 disordered regions span residues 1–40 and 102–124; these read MQYQ…GEPR and AGTA…RVDE. Residues 23–32 are compositionally biased toward basic and acidic residues; sequence SKSELGREPT. Residues 106-124 show a composition bias toward polar residues; the sequence is RVTSRPGQDGQVNATRVDE.

The protein belongs to the eukaryotic ribosomal protein eS8 family. Part of the 30S ribosomal subunit.

The polypeptide is Small ribosomal subunit protein eS8 (Halobacterium salinarum (strain ATCC 29341 / DSM 671 / R1)).